A 428-amino-acid chain; its full sequence is Enolase (428 aa).

A (2R)-2-phosphoglycerate-binding site is contributed by Gln-163. Glu-205 functions as the Proton donor in the catalytic mechanism. Mg(2+) contacts are provided by Asp-242, Glu-285, and Asp-312. Positions 337, 366, 367, and 388 each coordinate (2R)-2-phosphoglycerate. The active-site Proton acceptor is Lys-337.

This sequence belongs to the enolase family. The cofactor is Mg(2+).

Its subcellular location is the cytoplasm. It is found in the secreted. The protein localises to the cell surface. The catalysed reaction is (2R)-2-phosphoglycerate = phosphoenolpyruvate + H2O. The protein operates within carbohydrate degradation; glycolysis; pyruvate from D-glyceraldehyde 3-phosphate: step 4/5. Its function is as follows. Catalyzes the reversible conversion of 2-phosphoglycerate (2-PG) into phosphoenolpyruvate (PEP). It is essential for the degradation of carbohydrates via glycolysis. In Finegoldia magna (strain ATCC 29328 / DSM 20472 / WAL 2508) (Peptostreptococcus magnus), this protein is Enolase.